The primary structure comprises 78 residues: Chondrosarcoma-associated gene 1 protein (78 aa).

The signal sequence occupies residues 1–19 (MSATTACWPAFTVLGEARG). The disordered stretch occupies residues 35 to 78 (KMSRKPRASSPFSNNHPSTPKRFPRQPRREKGPVKEVPGTKGSP).

In terms of tissue distribution, expressed in chondrosarcoma, melanoma, cartilage and testis, but not in other normal tissues.

It localises to the cytoplasm. The protein resides in the cytoskeleton. Its subcellular location is the microtubule organizing center. The protein localises to the centrosome. It is found in the spindle pole. Functionally, may play an important role in maintaining centrosome integrity during mitosis. The sequence is that of Chondrosarcoma-associated gene 1 protein from Homo sapiens (Human).